The chain runs to 548 residues: MAASSADKCRPLANFHPSVWGYHFLSYTHEITNQEKVEVDEYKETIRKMLVETCDNSTQKLVLIDAMQRLGVAYHFDNEIETSIQNIFDASSKQNDNDNNLYVVSLRFRLVRQQGHYMSSDVFKQFTNQDGKFKETLTNDVQGLLSLYEASHLRVRNEEILEEALTFTTTHLESIVSNLSNNNNSLKVEVGEALTQPIRMTLPRMGARKYISIYENNDAHHHLLLKFAKLDFNMLQKFHQRELSDLTRWWKDLDFANKYPYARDRLVECYFWILGVYFEPKYSRARKMMTKVLNLTSIIDDTFDAYATFDELVTFNDAIQRWDANAIDSIQPYMRPAYQALLDIYSEMEQVLSKEGKLDRVYYAKNEMKKLVRAYFKETQWLNDCDHIPKYEEQVENAIVSAGYMMISTTCLVGIEEFISHETFEWLMNESVIVRASALIARAMNDIVGHEDEQERGHVASLIECYMKDYGASKQETYIKFLKEVTNAWKDINKQFFRPTEVPMFVLERVLNLTRVADTLYKEKDTYTNAKGKLKNMINSILIESVKI.

The Mg(2+) site is built by aspartate 300, aspartate 304, and glutamate 453. Positions 300–304 (DDTFD) match the DDXXD motif motif.

Belongs to the terpene synthase family. Tpsa subfamily. Mg(2+) is required as a cofactor. It depends on Mn(2+) as a cofactor. In terms of tissue distribution, mostly expressed in stem and trichomes, to a lower extent in roots, leaves and flowers and, at low levels, in fruits.

The protein resides in the cytoplasm. The catalysed reaction is (2E,6E)-farnesyl diphosphate = germacrene C + diphosphate. The enzyme catalyses (2E)-geranyl diphosphate = terpinolene + diphosphate. It catalyses the reaction (2E)-geranyl diphosphate = limonene + diphosphate. It carries out the reaction (2E)-geranyl diphosphate = beta-myrcene + diphosphate. The catalysed reaction is (2Z,6Z)-farnesyl diphosphate = germacrene C + diphosphate. It functions in the pathway secondary metabolite biosynthesis; terpenoid biosynthesis. Involved in the biosynthesis of germacrene C, one of the most abundant sesquiterpene in the leaf oil of tomato. Produces mainly germacrene C, but also smaller amounts of germacrene A, B and D when used with farnesyl diphosphate (FPP) as substrate; able to use both (2E,6E)-farnesyl diphosphate ((EE)-FPP) and (2Z,6Z)-farnesyl diphosphate ((ZZ)-FPP). No or low activity with geranylgeranyl diphosphate (GGPP). Can act with a low efficiency as a monoterpene synthase with geranyl diphosphate (GPP) as substrate, thus producing beta-myrcene, limonene and terpinolene. In Solanum lycopersicum (Tomato), this protein is Sesquiterpene synthase 9.